The chain runs to 479 residues: Sulfate adenylyltransferase subunit 1 (479 aa).

The region spanning 25–239 (KSLLRFLTCG…EVLETVDIQR (215 aa)) is the tr-type G domain. Residues 34–41 (GSVDDGKS) are G1. 34 to 41 (GSVDDGKS) contacts GTP. The G2 stretch occupies residues 92–96 (GITID). The interval 113 to 116 (DTPG) is G3. GTP is bound by residues 113–117 (DTPGH) and 168–171 (NKMD). The G4 stretch occupies residues 168 to 171 (NKMD). Residues 206–208 (SAL) are G5.

The protein belongs to the TRAFAC class translation factor GTPase superfamily. Classic translation factor GTPase family. CysN/NodQ subfamily. In terms of assembly, heterodimer composed of CysD, the smaller subunit, and CysN.

It carries out the reaction sulfate + ATP + H(+) = adenosine 5'-phosphosulfate + diphosphate. The protein operates within sulfur metabolism; hydrogen sulfide biosynthesis; sulfite from sulfate: step 1/3. With CysD forms the ATP sulfurylase (ATPS) that catalyzes the adenylation of sulfate producing adenosine 5'-phosphosulfate (APS) and diphosphate, the first enzymatic step in sulfur assimilation pathway. APS synthesis involves the formation of a high-energy phosphoric-sulfuric acid anhydride bond driven by GTP hydrolysis by CysN coupled to ATP hydrolysis by CysD. This is Sulfate adenylyltransferase subunit 1 from Salmonella agona (strain SL483).